The following is a 473-amino-acid chain: Photosystem II CP43 reaction center protein (473 aa).

Positions 1-14 are excised as a propeptide; sequence MKTLYSLRRFYHVE. An N-acetylthreonine modification is found at threonine 15. At threonine 15 the chain carries Phosphothreonine. A run of 5 helical transmembrane segments spans residues 69 to 93, 134 to 155, 178 to 200, 255 to 275, and 291 to 312; these read LFEV…PHLA, LIGP…KDKN, KAVW…RKIT, KPFA…LSYS, and WFNN…ASQA. Glutamate 367 is a [CaMn4O5] cluster binding site. Residues 447–471 traverse the membrane as a helical segment; it reads RARAAAAGFEKGIDRETEPVFFMNP.

This sequence belongs to the PsbB/PsbC family. PsbC subfamily. PSII is composed of 1 copy each of membrane proteins PsbA, PsbB, PsbC, PsbD, PsbE, PsbF, PsbH, PsbI, PsbJ, PsbK, PsbL, PsbM, PsbT, PsbX, PsbY, PsbZ, Psb30/Ycf12, at least 3 peripheral proteins of the oxygen-evolving complex and a large number of cofactors. It forms dimeric complexes. The cofactor is Binds multiple chlorophylls and provides some of the ligands for the Ca-4Mn-5O cluster of the oxygen-evolving complex. It may also provide a ligand for a Cl- that is required for oxygen evolution. PSII binds additional chlorophylls, carotenoids and specific lipids..

It is found in the plastid. The protein localises to the chloroplast thylakoid membrane. One of the components of the core complex of photosystem II (PSII). It binds chlorophyll and helps catalyze the primary light-induced photochemical processes of PSII. PSII is a light-driven water:plastoquinone oxidoreductase, using light energy to abstract electrons from H(2)O, generating O(2) and a proton gradient subsequently used for ATP formation. The sequence is that of Photosystem II CP43 reaction center protein from Staurastrum punctulatum (Green alga).